A 90-amino-acid chain; its full sequence is Probable Fe(2+)-trafficking protein (90 aa).

Belongs to the Fe(2+)-trafficking protein family.

In terms of biological role, could be a mediator in iron transactions between iron acquisition and iron-requiring processes, such as synthesis and/or repair of Fe-S clusters in biosynthetic enzymes. The protein is Probable Fe(2+)-trafficking protein of Nitrosomonas europaea (strain ATCC 19718 / CIP 103999 / KCTC 2705 / NBRC 14298).